The sequence spans 263 residues: Lens fiber major intrinsic protein (263 aa).

The Cytoplasmic portion of the chain corresponds to 1 to 9 (MWELRSASF). The chain crosses the membrane as a helical span at residues 10–29 (WRAIFAEFFATLFYVFFGLG). Residues 30–41 (ASLRWAPGPLHV) are Extracellular-facing. A helical membrane pass occupies residues 42-59 (LQVALAFGLALAXLVQTV). Topologically, residues 60–61 (GH) are cytoplasmic. Positions 62–77 (ISGAHVNPAVTFXFLV) form an intramembrane region, discontinuously helical. The NPA 1 signature appears at 68 to 70 (NPA). Over 78-82 (GSQMS) the chain is Cytoplasmic. Residues 83-106 (LLRAFCYMAAQLLGAVAGAAVLYS) traverse the membrane as a helical segment. The Extracellular portion of the chain corresponds to 107 to 127 (VTPPAVRGNLALNTLHAGVSV). A helical transmembrane segment spans residues 128–148 (XQATTVEIFLTLQFVLCIFAT). The Cytoplasmic segment spans residues 149–156 (YDERRNGR). Residues 157-175 (LGSVALAVGFSLTLGHLFG) traverse the membrane as a helical segment. Residues 176–178 (MYY) are Extracellular-facing. The segment at residues 179–193 (TGAGMNPARSFAPAI) is an intramembrane region (discontinuously helical). The short motif at 184 to 186 (NPA) is the NPA 2 element. Over 194-200 (LTRNFTN) the chain is Extracellular. Residues 201–222 (HWVYWVGPIIGGGLGSLLYDFL) form a helical membrane-spanning segment. The Cytoplasmic segment spans residues 223–263 (LFPRLKSVSERLSILKGTRPSDNNGQPEGTGEPVELKTQAL). Residues 227 to 237 (LKSVSERLSIL) are interaction with CALM. Phosphoserine is present on residues Ser-235 and Ser-243. Residues 238-263 (KGTRPSDNNGQPEGTGEPVELKTQAL) form a disordered region. A deamidated asparagine; by deterioration mark is found at Asn-245 and Asn-246.

Belongs to the MIP/aquaporin (TC 1.A.8) family. As to quaternary structure, homotetramer; each monomer provides an independent water pore. Two homotetramers on opposing membranes can dimerize, forming a cell-cell junction. Interacts with CALM; the calcium-calmodulin/CALM complex interacts with the cytoplasmic domains of two aquaporins, leading to channel closure. Interacts with BFSP1 (via C-terminus); prevents calcium-dependent inhibition of the water channel activity. Post-translationally, subject to partial proteolytic cleavage in the eye lens core. Partial proteolysis promotes interactions between tetramers from adjoining membranes. In terms of processing, fatty acylated at Met-1 and Lys-238. The acyl modifications, in decreasing order of ion abundance, are: oleoyl (C18:1) &gt; palmitoyl (C16:0) &gt; stearoyl (C18:0) &gt; eicosenoyl (C20:1) &gt; dihomo-gamma-linolenoyl (C20:3) &gt; palmitoleoyl (C16:1) &gt; eicosadienoyl (C20:2). Detected in eye lens (at protein level).

It is found in the cell membrane. The protein localises to the cell junction. It catalyses the reaction H2O(in) = H2O(out). Its activity is regulated as follows. The water channel activity is inhibited by calcium through calmodulin/CALM. Aquaporins form homotetrameric transmembrane channels, with each monomer independently mediating water transport across the plasma membrane along its osmotic gradient. Specifically expressed in lens fiber cells, this aquaporin is crucial for maintaining lens water homeostasis and transparency. Beyond water permeability, it also acts as a cell-to-cell adhesion molecule, forming thin junctions between lens fiber cells that are essential for maintaining the ordered structure and transparency of the lens. The chain is Lens fiber major intrinsic protein from Cavia porcellus (Guinea pig).